A 593-amino-acid polypeptide reads, in one-letter code: UvrABC system protein C (593 aa).

Residues 14–91 (DSPGCYLHKD…IQENMPKYNI (78 aa)) enclose the GIY-YIG domain. One can recognise a UVR domain in the interval 196–231 (NKIVNGLTEKMKSAAMTMEFERAAEYRDLIEAISLL).

The protein belongs to the UvrC family. In terms of assembly, interacts with UvrB in an incision complex.

Its subcellular location is the cytoplasm. The UvrABC repair system catalyzes the recognition and processing of DNA lesions. UvrC both incises the 5' and 3' sides of the lesion. The N-terminal half is responsible for the 3' incision and the C-terminal half is responsible for the 5' incision. In Streptococcus agalactiae serotype V (strain ATCC BAA-611 / 2603 V/R), this protein is UvrABC system protein C.